A 364-amino-acid polypeptide reads, in one-letter code: mRNA decay activator protein ZFP36L2-B (364 aa).

Positions 102–111 are enriched in basic and acidic residues; sequence SFSENGERSQ. The interval 102-129 is disordered; that stretch reads SFSENGERSQHLLHLQQQQQQQKAGAQV. Low complexity predominate over residues 113-123; that stretch reads LLHLQQQQQQQ. An RNA-binding motif is present at residues 133–138; that stretch reads RYKTEL. 2 C3H1-type zinc fingers span residues 133–161 and 171–199; these read RYKT…HGFH and KYKT…HNAE. Residues 150-191 are RNA-binding; the sequence is YGEKCQFAHGFHELRSLTRHPKYKTELCRTFHTIGFCPYGPR. Residues 308–350 form a disordered region; the sequence is SESPVFDAPPSPPDSLSDRDSYLSGSLSSGSLSGSDSPTLDSN. The segment covering 329–348 has biased composition (low complexity); the sequence is YLSGSLSSGSLSGSDSPTLD.

Phosphorylated. In terms of tissue distribution, remains unlocalized in the egg and early embryo. From stage 21 (late neurula), expressed around the pronephros in the anterior crests, pharyngeal arch, hindbrain, mesodermal tissues around the pronephros and tail-bud. This expression pattern is maintained up to the tadpole stage.

Its subcellular location is the nucleus. The protein localises to the cytoplasm. In terms of biological role, zinc-finger RNA-binding protein that destabilizes several cytoplasmic AU-rich element (ARE)-containing mRNA transcripts by promoting their poly(A) tail removal or deadenylation, and hence provide a mechanism for attenuating protein synthesis. Acts as a 3'-untranslated region (UTR) ARE mRNA-binding adapter protein to communicate signaling events to the mRNA decay machinery. Functions by recruiting the CCR4-NOT deadenylase complex and probably other components of the cytoplasmic RNA decay machinery to the bound ARE-containing mRNAs, and hence promotes ARE-mediated mRNA deadenylation and decay processes. Binds to 3'-UTR ARE of numerous mRNAs. Also induces the degradation of ARE-containing mRNAs even in absence of poly(A) tail. Required for tubulogenesis during pronephros development. The protein is mRNA decay activator protein ZFP36L2-B (zfp36l2-B) of Xenopus laevis (African clawed frog).